The chain runs to 568 residues: MERKAIIEFKDFTAHYTVQSKPTLNNINLTIYEGEKVLIAGPSGSGKSTLANCINGLIPFSTDIEISGSLKIKGKETKDLSVFEISKMVGTVLQDPDSQFIGLTVAEDIAFKLENNCVSQEEMKKKVNYVSKIVDIENRLDLAPYSLSGGQKQRVTLAGTIVDDVDILLFDEPLASLDPAAGKASIELIDKIQKEEKKTVIIIEHRLEEVLNCDVDRIILMNEGEIIADTNPNEILASNKLKECGIREPLYITALKYSGYELNKEMNLENIDKLKLSDDGEKLKTWYKSLNFNKKEREEDTLLEFKNVSFSYDKKKDILSDINFKINRGDIVSVVGKNGAGKSTISKIICGFFKESKGDILFEGKSLDGKTIKERGEEIGVVLQNPNQMISKTMIFDEVALGLRVRGIDEKEVKERVIETLKTCGLYPYRNWPVSALSFGQKKRVTIASILVLNPKVIILDEPTAGQDYKHYNEIMEFLLKLNKKGVTIILITHDMHLMLEYTDKAIVISNGRKIADTTSAEILTDKEVIEKASLKETSLYDLALKFKLEDPKDFVCKFIDFDRGARN.

ABC transporter domains follow at residues 7–248 (IEFK…GIRE) and 303–536 (LEFK…ASLK). ATP contacts are provided by residues 41–48 (GPSGSGKS) and 336–343 (GKNGAGKS).

Belongs to the ABC transporter superfamily.

The protein localises to the cell membrane. In terms of biological role, probably part of an ABC transporter complex. Responsible for energy coupling to the transport system. This chain is Putative ABC transporter ATP-binding protein CPE1583, found in Clostridium perfringens (strain 13 / Type A).